The following is a 182-amino-acid chain: NADH-quinone oxidoreductase subunit I (182 aa).

4Fe-4S ferredoxin-type domains follow at residues 52–82 and 92–121; these read LTRD…LQKA and DFFR…LTPD. The [4Fe-4S] cluster site is built by Cys-62, Cys-65, Cys-68, Cys-72, Cys-101, Cys-104, Cys-107, and Cys-111.

It belongs to the complex I 23 kDa subunit family. NDH-1 is composed of 13 different subunits. Subunits NuoA, H, J, K, L, M, N constitute the membrane sector of the complex. Requires [4Fe-4S] cluster as cofactor.

It is found in the cell inner membrane. The enzyme catalyses a quinone + NADH + 5 H(+)(in) = a quinol + NAD(+) + 4 H(+)(out). In terms of biological role, NDH-1 shuttles electrons from NADH, via FMN and iron-sulfur (Fe-S) centers, to quinones in the respiratory chain. The immediate electron acceptor for the enzyme in this species is believed to be ubiquinone. Couples the redox reaction to proton translocation (for every two electrons transferred, four hydrogen ions are translocated across the cytoplasmic membrane), and thus conserves the redox energy in a proton gradient. This is NADH-quinone oxidoreductase subunit I from Pseudomonas syringae pv. tomato (strain ATCC BAA-871 / DC3000).